A 329-amino-acid chain; its full sequence is Beta-ketoacyl-[acyl-carrier-protein] synthase III (329 aa).

Catalysis depends on residues Cys114 and His255. An ACP-binding region spans residues 256–260; the sequence is QANQR. Asn285 is an active-site residue.

The protein belongs to the thiolase-like superfamily. FabH family. As to quaternary structure, homodimer.

It is found in the cytoplasm. The catalysed reaction is malonyl-[ACP] + acetyl-CoA + H(+) = 3-oxobutanoyl-[ACP] + CO2 + CoA. Its pathway is lipid metabolism; fatty acid biosynthesis. Its function is as follows. Catalyzes the condensation reaction of fatty acid synthesis by the addition to an acyl acceptor of two carbons from malonyl-ACP. Catalyzes the first condensation reaction which initiates fatty acid synthesis and may therefore play a role in governing the total rate of fatty acid production. Possesses both acetoacetyl-ACP synthase and acetyl transacylase activities. Its substrate specificity determines the biosynthesis of branched-chain and/or straight-chain of fatty acids. The sequence is that of Beta-ketoacyl-[acyl-carrier-protein] synthase III from Trichodesmium erythraeum (strain IMS101).